The following is a 600-amino-acid chain: Polypeptide N-acetylgalactosaminyltransferase (600 aa).

Residues 1-7 (MVRRKLR) lie on the Cytoplasmic side of the membrane. Residues 8–28 (LLVILAGIWLVGIVVYLFKGD) traverse the membrane as a helical; Signal-anchor for type II membrane protein segment. The Lumenal portion of the chain corresponds to 29–600 (DQSEFEKRVI…KWTFSLSKNR (572 aa)). Intrachain disulfides connect C154-C382, C373-C451, C484-C501, C524-C541, and C567-C583. The tract at residues 163 to 268 (LPDTSVIITF…EKWLEPLLDR (106 aa)) is catalytic subdomain A. 3 residues coordinate substrate: T171, D204, and R229. D252 provides a ligand contact to Mn(2+). S253 contacts substrate. H254 is a Mn(2+) binding site. The segment at 328-390 (PIRTPMIAGG…PCSRVGHVFR (63 aa)) is catalytic subdomain B. W359 is a binding site for substrate. H387 contributes to the Mn(2+) binding site. Substrate contacts are provided by R390, H393, and Y395. In terms of domain architecture, Ricin B-type lectin spans 466-595 (KIPSVQDIAF…SSYTQKWTFS (130 aa)).

It belongs to the glycosyltransferase 2 family. GalNAc-T subfamily. Requires Mn(2+) as cofactor. O-glycosylated.

It localises to the golgi apparatus membrane. The catalysed reaction is L-seryl-[protein] + UDP-N-acetyl-alpha-D-galactosamine = a 3-O-[N-acetyl-alpha-D-galactosaminyl]-L-seryl-[protein] + UDP + H(+). The enzyme catalyses L-threonyl-[protein] + UDP-N-acetyl-alpha-D-galactosamine = a 3-O-[N-acetyl-alpha-D-galactosaminyl]-L-threonyl-[protein] + UDP + H(+). It participates in protein modification; protein glycosylation. Its activity is regulated as follows. No change in activity by addition of up to 10% methanol or glycerol, or 5% acetonitrile. 40% reduction in activity by 10% acetonitrile or by lyophilization. Activity requires divalent cations, the best being Mn(2+) (10-20 mM), followed by Co(2+), Mg(2+) and Ca(2+). Loss of activity with Cu(2+) or in the presence of EDTA. Inhibited by UDP, but not by UMP, UTP, ADP or GDP nucleotides. No inhibition by galactose, N-acetylglucosamine or N-acetylgalactosamine sugars. In terms of biological role, catalyzes the initial reaction in O-linked oligosaccharide biosynthesis, the transfer of an N-acetyl-D-galactosamine residue to a serine or threonine residue on the protein receptor. Has a broad substrate specificity. Acceptor peptides include Muc2, Muc5Ac, Muc1a and Muc1a', with Muc2 as the best acceptor. Acts on non-glycosylated and mono- or multi-glycosylated peptide substrates. Transfers preferably to threonine rather than serine residue. Thr-15 is the most preferred site of glycosylation in Muc2 peptide PTTTPITTTTTVTPTPTPTGTQTK having proline residues at position -1, and at positions +1 and +3, where the number represents the distance from the C-terminal and N-terminal hydroxyl amino acid, respectively. Transfer of the N-acetyl-D-galactosamine (GalNAc) is optimal with proline residues at positions -3, -1, +1 and +3, but other amino acids are tolerated, although some, such as phenylalanine, isoleucine or leucine at -1, or lysine at +3 prevent the transfer completely. Second GalNAc is transferred to Muc2 Thr-2 or Thr-13, both of which have two proline residues nearby. Up to nine sites can be glycosylated within Muc2, but eight are used simultaneously since Thr-19 and Thr-21 are not detected to be glycosylated at the same time. Glycosylation is not detected of a potential site, which is next to an already glycosylated site, but only one amino acid is needed in between two glycosylation sites. Ser-5 is the preferred glycosylation site in Muc5Ac peptide GTTPSPVPTTSTTSAP into which up to four GalNAcs can be attached. Only the threonine residues are detected as pontential glycosylation sites in Muc1a APPAHGVTSAPDTRPAPGC and Muc1a' AHGVTSAPDTR peptides. Transferase activity is restricted to UDP-GalNAc as a donor, and none of the nucleotide sugars UDP-Gal, UDP-GlcNAc, GDP-fucose, UDP-xylose, UDP-glucuronic acid or CMP-neuraminic acid are utilized as donors. The polypeptide is Polypeptide N-acetylgalactosaminyltransferase (Biomphalaria glabrata (Bloodfluke planorb)).